Reading from the N-terminus, the 508-residue chain is Steroid 17-alpha-hydroxylase/17,20 lyase (508 aa).

Heme is bound at residue Cys-442.

It belongs to the cytochrome P450 family. Requires heme as cofactor.

The protein localises to the endoplasmic reticulum membrane. The protein resides in the microsome membrane. The enzyme catalyses a C21-steroid + reduced [NADPH--hemoprotein reductase] + O2 = a 17alpha-hydroxy-C21-steroid + oxidized [NADPH--hemoprotein reductase] + H2O + H(+). It carries out the reaction progesterone + reduced [NADPH--hemoprotein reductase] + O2 = 17alpha-hydroxyprogesterone + oxidized [NADPH--hemoprotein reductase] + H2O + H(+). The catalysed reaction is pregnenolone + reduced [NADPH--hemoprotein reductase] + O2 = 17alpha-hydroxypregnenolone + oxidized [NADPH--hemoprotein reductase] + H2O + H(+). It catalyses the reaction 17alpha-hydroxyprogesterone + reduced [NADPH--hemoprotein reductase] + O2 = androst-4-ene-3,17-dione + acetate + oxidized [NADPH--hemoprotein reductase] + H2O + 2 H(+). The enzyme catalyses 17alpha-hydroxyprogesterone + reduced [NADPH--hemoprotein reductase] + O2 = 16alpha,17alpha-dihydroxyprogesterone + oxidized [NADPH--hemoprotein reductase] + H2O + H(+). It carries out the reaction 16alpha,17alpha-dihydroxyprogesterone + reduced [NADPH--hemoprotein reductase] + O2 = 6beta,16alpha,17alpha-trihydroxyprogesterone + oxidized [NADPH--hemoprotein reductase] + H2O + H(+). The catalysed reaction is 17alpha-hydroxypregnenolone + reduced [NADPH--hemoprotein reductase] + O2 = 3beta-hydroxyandrost-5-en-17-one + acetate + oxidized [NADPH--hemoprotein reductase] + H2O + 2 H(+). It catalyses the reaction 16alpha,17alpha-dihydroxypregnenolone + reduced [NADPH--hemoprotein reductase] + O2 = 3beta,16alpha-dihydroxy-androst-5-en-17-one + acetate + oxidized [NADPH--hemoprotein reductase] + H2O + 2 H(+). The enzyme catalyses 3beta-hydroxyandrost-5-en-17-one + reduced [NADPH--hemoprotein reductase] + O2 = 3beta,16alpha-dihydroxy-androst-5-en-17-one + oxidized [NADPH--hemoprotein reductase] + H2O + H(+). It carries out the reaction androst-4-ene-3,17-dione + reduced [NADPH--hemoprotein reductase] + O2 = 16alpha-hydroxyandrost-4-ene-3,17-dione + oxidized [NADPH--hemoprotein reductase] + H2O + H(+). It participates in steroid hormone biosynthesis. Its pathway is steroid biosynthesis; glucocorticoid biosynthesis. Regulated predominantly by intracellular cAMP levels. The 17,20-lyase activity is stimulated by cytochrome b5, which acts as an allosteric effector increasing the Vmax of the lyase activity. Functionally, a cytochrome P450 monooxygenase involved in corticoid and androgen biosynthesis. Catalyzes 17-alpha hydroxylation of C21 steroids, which is common for both pathways. A second oxidative step, required only for androgen synthesis, involves an acyl-carbon cleavage. The 17-alpha hydroxy intermediates, as part of adrenal glucocorticoids biosynthesis pathway, are precursors of cortisol. Hydroxylates steroid hormones, pregnenolone and progesterone to form 17-alpha hydroxy metabolites, followed by the cleavage of the C17-C20 bond to form C19 steroids, dehydroepiandrosterone (DHEA) and androstenedione. Has 16-alpha hydroxylase activity. Catalyzes 16-alpha hydroxylation of 17-alpha hydroxy pregnenolone, followed by the cleavage of the C17-C20 bond to form 16-alpha-hydroxy DHEA. Also 16-alpha hydroxylates androgens, relevant for estriol synthesis. Mechanistically, uses molecular oxygen inserting one oxygen atom into a substrate, and reducing the second into a water molecule, with two electrons provided by NADPH via cytochrome P450 reductase (CPR; NADPH-ferrihemoprotein reductase). The sequence is that of Steroid 17-alpha-hydroxylase/17,20 lyase (CYP17A1) from Equus caballus (Horse).